The primary structure comprises 313 residues: Porphobilinogen deaminase (313 aa).

Cys242 is modified (S-(dipyrrolylmethanemethyl)cysteine).

It belongs to the HMBS family. As to quaternary structure, monomer. Requires dipyrromethane as cofactor.

It carries out the reaction 4 porphobilinogen + H2O = hydroxymethylbilane + 4 NH4(+). The protein operates within porphyrin-containing compound metabolism; protoporphyrin-IX biosynthesis; coproporphyrinogen-III from 5-aminolevulinate: step 2/4. Its function is as follows. Tetrapolymerization of the monopyrrole PBG into the hydroxymethylbilane pre-uroporphyrinogen in several discrete steps. The chain is Porphobilinogen deaminase from Proteus mirabilis (strain HI4320).